Here is a 271-residue protein sequence, read N- to C-terminus: Ribosomal RNA small subunit methyltransferase A (271 aa).

S-adenosyl-L-methionine-binding residues include His-14, Leu-16, Gly-41, Glu-63, Asp-89, and Asn-107.

This sequence belongs to the class I-like SAM-binding methyltransferase superfamily. rRNA adenine N(6)-methyltransferase family. RsmA subfamily.

The protein resides in the cytoplasm. It catalyses the reaction adenosine(1518)/adenosine(1519) in 16S rRNA + 4 S-adenosyl-L-methionine = N(6)-dimethyladenosine(1518)/N(6)-dimethyladenosine(1519) in 16S rRNA + 4 S-adenosyl-L-homocysteine + 4 H(+). Functionally, specifically dimethylates two adjacent adenosines (A1518 and A1519) in the loop of a conserved hairpin near the 3'-end of 16S rRNA in the 30S particle. May play a critical role in biogenesis of 30S subunits. This chain is Ribosomal RNA small subunit methyltransferase A, found in Lawsonia intracellularis (strain PHE/MN1-00).